A 381-amino-acid polypeptide reads, in one-letter code: Guanine nucleotide-binding protein G(olf) subunit alpha (381 aa).

Residues 1-25 (MGCLGNSSKTAEDQGVDEKERREAN) are disordered. The N-palmitoyl glycine moiety is linked to residue Gly-2. Cys-3 carries S-palmitoyl cysteine lipidation. Residues 10–25 (TAEDQGVDEKERREAN) show a composition bias toward basic and acidic residues. The G-alpha domain occupies 41–381 (ATHRLLLLGA…RMHLKQYELL (341 aa)). The G1 motif stretch occupies residues 44–57 (RLLLLGAGESGKST). Residues Glu-52, Ser-53, Gly-54, Lys-55, Ser-56, and Thr-57 each coordinate GTP. Ser-56 is a Mg(2+) binding site. Thr-178 is subject to Phosphothreonine. Positions 183–191 (DLLRCRVLT) are G2 motif. Residues Leu-185, Arg-186, and Thr-191 each coordinate GTP. 2 residues coordinate Mg(2+): Thr-191 and Asp-210. The interval 206–215 (FHMFDVGGQR) is G3 motif. GTP is bound by residues Gly-213, Asn-279, Lys-280, Asp-282, and Ala-353. The segment at 275–282 (ILFLNKQD) is G4 motif. A G5 motif region spans residues 351–356 (TCAVDT).

Belongs to the G-alpha family. G(s) subfamily. In terms of assembly, g proteins are composed of 3 units; alpha, beta and gamma. The alpha chain contains the guanine nucleotide binding site. Interacts with GAS2L2. Interacts (GDP-bound form) with RIC8B (via C-terminus); promoting GNAL folding and association with the plasma membrane.

The protein localises to the cell membrane. The catalysed reaction is GTP + H2O = GDP + phosphate + H(+). In terms of biological role, guanine nucleotide-binding protein (G protein) involved as transducer in olfactory signal transduction controlled by G protein-coupled receptors (GPCRs). Contains the guanine nucleotide binding site and alternates between an active, GTP-bound state and an inactive, GDP-bound state. Signaling by an activated GPCR promotes GDP release and GTP binding. The alpha subunit has a low GTPase activity that converts bound GTP to GDP, thereby terminating the signal. Both GDP release and GTP hydrolysis are modulated by numerous regulatory proteins. GNAL/G(olf) alpha specifically mediates olfactory signal transduction within the olfactory neuroepithelium and the basal ganglia following GPCRs activation. Acts by promoting the specific activation of adenylyl cyclase ADCY3, resulting in increased levels of the signaling molecule cAMP. This chain is Guanine nucleotide-binding protein G(olf) subunit alpha, found in Mus musculus (Mouse).